A 271-amino-acid polypeptide reads, in one-letter code: Fatty acid elongase A (271 aa).

7 helical membrane-spanning segments follow: residues 35 to 55 (ILFP…LQIF), 68 to 88 (AMFH…GIVI), 102 to 122 (IICK…FYLS), 139 to 159 (SLLF…WANL), 165 to 185 (CQWV…FYYF), 198 to 220 (HITT…WHFY), and 237 to 257 (TSAF…QFFV).

It belongs to the ELO family.

Its subcellular location is the membrane. It catalyses the reaction a very-long-chain acyl-CoA + malonyl-CoA + H(+) = a very-long-chain 3-oxoacyl-CoA + CO2 + CoA. In terms of biological role, fatty acid elongase with strict substrate specificity for monounsaturated fatty acids, in particular 16:1 (delta-9) to produce the unusual 18:1 (delta-11) fatty acid. The polypeptide is Fatty acid elongase A (eloA) (Dictyostelium discoideum (Social amoeba)).